The chain runs to 584 residues: Pectinesterase 1 (584 aa).

A signal peptide spans 1–42 (MTHIKEFFTKLSESSSNQNISNIPKKKKKLFLALFATLLVVA). 3 N-linked (GlcNAc...) asparagine glycosylation sites follow: Asn-108, Asn-129, and Asn-226. Substrate contacts are provided by Thr-348 and Gln-378. Residue Asp-401 is the Proton donor of the active site. A disulfide bridge connects residues Cys-415 and Cys-435. Asp-422 (nucleophile) is an active-site residue. Residues Arg-490 and Trp-492 each coordinate substrate.

This sequence in the N-terminal section; belongs to the PMEI family. In the C-terminal section; belongs to the pectinesterase family. Expressed at high levels in flower buds, shoots and young leaves, and at lower levels in young fruit, young bark and juice vesicles. Not expressed at significant levels in leaf abscission zones following ethylene treatment or in mature leaves. In fruit abscission zones, expression was initially undetectable but increased markedly following ethylene treatment.

The protein localises to the secreted. Its subcellular location is the cell wall. It carries out the reaction [(1-&gt;4)-alpha-D-galacturonosyl methyl ester](n) + n H2O = [(1-&gt;4)-alpha-D-galacturonosyl](n) + n methanol + n H(+). It functions in the pathway glycan metabolism; pectin degradation; 2-dehydro-3-deoxy-D-gluconate from pectin: step 1/5. Acts in the modification of cell walls via demethylesterification of cell wall pectin. The polypeptide is Pectinesterase 1 (PECS-1.1) (Citrus sinensis (Sweet orange)).